A 225-amino-acid polypeptide reads, in one-letter code: PKHD-type hydroxylase YbiX (225 aa).

The region spanning 78-177 is the Fe2OG dioxygenase domain; that stretch reads TLSTPLFNRY…RVASFMWIQS (100 aa). Fe cation is bound by residues His96, Asp98, and His158. A 2-oxoglutarate-binding site is contributed by Arg168.

Fe(2+) is required as a cofactor. Requires L-ascorbate as cofactor.

The polypeptide is PKHD-type hydroxylase YbiX (Escherichia coli O6:H1 (strain CFT073 / ATCC 700928 / UPEC)).